We begin with the raw amino-acid sequence, 380 residues long: Chorismate synthase (380 aa).

The NADP(+) site is built by Arg40 and Arg46. Residues 128-130 (RSS), 247-248 (QA), Gly292, 307-311 (KPIPT), and Arg333 each bind FMN.

Belongs to the chorismate synthase family. In terms of assembly, homotetramer. It depends on FMNH2 as a cofactor.

The catalysed reaction is 5-O-(1-carboxyvinyl)-3-phosphoshikimate = chorismate + phosphate. Its pathway is metabolic intermediate biosynthesis; chorismate biosynthesis; chorismate from D-erythrose 4-phosphate and phosphoenolpyruvate: step 7/7. Functionally, catalyzes the anti-1,4-elimination of the C-3 phosphate and the C-6 proR hydrogen from 5-enolpyruvylshikimate-3-phosphate (EPSP) to yield chorismate, which is the branch point compound that serves as the starting substrate for the three terminal pathways of aromatic amino acid biosynthesis. This reaction introduces a second double bond into the aromatic ring system. This chain is Chorismate synthase, found in Alkaliphilus metalliredigens (strain QYMF).